We begin with the raw amino-acid sequence, 242 residues long: uncharacterized protein (242 aa).

Residues 8 to 76 (TPLYIQLKQI…QGKGTFVKSP (69 aa)) enclose the HTH gntR-type domain. The segment at residues 36-55 (ENELCTKYNVSRITVRKAIL) is a DNA-binding region (H-T-H motif).

This is an uncharacterized protein from Bacillus subtilis (strain 168).